A 525-amino-acid polypeptide reads, in one-letter code: Bifunctional purine biosynthesis protein PurH (525 aa).

Residues methionine 1–threonine 149 enclose the MGS-like domain.

The protein belongs to the PurH family.

The catalysed reaction is (6R)-10-formyltetrahydrofolate + 5-amino-1-(5-phospho-beta-D-ribosyl)imidazole-4-carboxamide = 5-formamido-1-(5-phospho-D-ribosyl)imidazole-4-carboxamide + (6S)-5,6,7,8-tetrahydrofolate. It carries out the reaction IMP + H2O = 5-formamido-1-(5-phospho-D-ribosyl)imidazole-4-carboxamide. Its pathway is purine metabolism; IMP biosynthesis via de novo pathway; 5-formamido-1-(5-phospho-D-ribosyl)imidazole-4-carboxamide from 5-amino-1-(5-phospho-D-ribosyl)imidazole-4-carboxamide (10-formyl THF route): step 1/1. The protein operates within purine metabolism; IMP biosynthesis via de novo pathway; IMP from 5-formamido-1-(5-phospho-D-ribosyl)imidazole-4-carboxamide: step 1/1. This chain is Bifunctional purine biosynthesis protein PurH, found in Prosthecochloris aestuarii (strain DSM 271 / SK 413).